The sequence spans 347 residues: Phosphate acyltransferase (347 aa).

Belongs to the PlsX family. In terms of assembly, homodimer. Probably interacts with PlsY.

The protein localises to the cytoplasm. The enzyme catalyses a fatty acyl-[ACP] + phosphate = an acyl phosphate + holo-[ACP]. It participates in lipid metabolism; phospholipid metabolism. In terms of biological role, catalyzes the reversible formation of acyl-phosphate (acyl-PO(4)) from acyl-[acyl-carrier-protein] (acyl-ACP). This enzyme utilizes acyl-ACP as fatty acyl donor, but not acyl-CoA. The sequence is that of Phosphate acyltransferase from Oleidesulfovibrio alaskensis (strain ATCC BAA-1058 / DSM 17464 / G20) (Desulfovibrio alaskensis).